A 46-amino-acid polypeptide reads, in one-letter code: Iota-conotoxin-like r11b (46 aa).

2 positions are modified to 4-hydroxyproline: P2 and P11. Cystine bridges form between C5–C19, C12–C22, C18–C27, and C21–C38. P29 carries the post-translational modification 4-hydroxyproline. The residue at position 44 (F44) is a D-phenylalanine.

Post-translationally, the natural D-Phe form of the peptide is more potent than the synthetic L-Phe form. Expressed by the venom duct.

Its subcellular location is the secreted. Functionally, iota-conotoxins bind to voltage-gated sodium channels (Nav) and act as agonists by shifting the voltage-dependence of activation to more hyperpolarized levels. Produces excitatory symptoms when injected intracranially into mice and is lethal at higher doses. Exposure to frog cutaneous pectoris induces spontaneous and repetitive action potentials. This effect is slowly reversible. Natural peptide (with D-Phe) is active on nerve, but not on muscle. Synthetic peptide (with L-Phe) is not active on both nerve and muscle. The polypeptide is Iota-conotoxin-like r11b (Conus radiatus (Rayed cone)).